The primary structure comprises 609 residues: MFS siderochrome iron transporter 1 (609 aa).

Composition is skewed to basic and acidic residues over residues 1–17 and 25–34; these read MSAL…EDNT and PHEKEIHETP. The segment at 1–69 is disordered; that stretch reads MSALTKIREG…NDSDVPSEDV (69 aa). Transmembrane regions (helical) follow at residues 81 to 101, 125 to 145, 154 to 174, 182 to 202, 220 to 240, 245 to 265, 300 to 320, 329 to 349, 368 to 390, 407 to 427, 432 to 452, 469 to 489, 496 to 516, and 573 to 593; these read LTWG…LFLI, LMTT…IPMA, AEGF…MAVS, AAQV…GVLA, SPYM…VIDV, WGFG…FLVL, VIGI…FNLA, TGYI…FGVW, SVVA…NYFF, YVNS…GFLI, FYKW…GLMI, IFIS…VLAA, AAAL…GGAI, and IRML…VPML.

It belongs to the major facilitator superfamily.

The protein resides in the cell membrane. Functionally, major facilitator transporter involved in extracellular siderophore uptake. Gibberella zeae produces extracellular coprogen-type siderophores as well as the intracellular siderophore ferricrocin. The role of extracellular siderophores is to supply iron to the fungus during plant infection, and the intracellular ferricrocin is required for intracellular iron distribution and storage with a crucial role in ascus and ascospore development. The sequence is that of MFS siderochrome iron transporter 1 from Gibberella zeae (strain ATCC MYA-4620 / CBS 123657 / FGSC 9075 / NRRL 31084 / PH-1) (Wheat head blight fungus).